The primary structure comprises 120 residues: Large ribosomal subunit protein bL12 (120 aa).

Belongs to the bacterial ribosomal protein bL12 family. In terms of assembly, homodimer. Part of the ribosomal stalk of the 50S ribosomal subunit. Forms a multimeric L10(L12)X complex, where L10 forms an elongated spine to which 2 to 4 L12 dimers bind in a sequential fashion. Binds GTP-bound translation factors.

Its function is as follows. Forms part of the ribosomal stalk which helps the ribosome interact with GTP-bound translation factors. Is thus essential for accurate translation. The protein is Large ribosomal subunit protein bL12 of Haemophilus ducreyi (strain 35000HP / ATCC 700724).